Here is a 332-residue protein sequence, read N- to C-terminus: GLIPR1-like protein 2 (332 aa).

The SCP domain maps to 57–191; the sequence is LHNELRGTVF…THAALFICNY (135 aa). N145 is a glycosylation site (N-linked (GlcNAc...) asparagine). A helical membrane pass occupies residues 253–273; it reads IFILFLRVASLLLCVIVVLIV. The interval 293–332 is disordered; sequence EGKTEVEIVMEEGEGEGEGGEGEGEGEEKEEEEMLEEDEQ. Residues 300–332 show a composition bias toward acidic residues; sequence IVMEEGEGEGEGGEGEGEGEEKEEEEMLEEDEQ.

This sequence belongs to the CRISP family.

It is found in the membrane. In Mus musculus (Mouse), this protein is GLIPR1-like protein 2 (Glipr1l2).